A 360-amino-acid polypeptide reads, in one-letter code: Ferredoxin--NADP reductase (360 aa).

Positions 25, 44, 52, 57, 97, 132, 298, and 339 each coordinate FAD.

It belongs to the ferredoxin--NADP reductase type 2 family. Homodimer. FAD is required as a cofactor.

It catalyses the reaction 2 reduced [2Fe-2S]-[ferredoxin] + NADP(+) + H(+) = 2 oxidized [2Fe-2S]-[ferredoxin] + NADPH. In Chlorobaculum tepidum (strain ATCC 49652 / DSM 12025 / NBRC 103806 / TLS) (Chlorobium tepidum), this protein is Ferredoxin--NADP reductase.